We begin with the raw amino-acid sequence, 386 residues long: Succinate--CoA ligase [ADP-forming] subunit beta (386 aa).

The ATP-grasp domain occupies 9 to 244 (KELLRKYGVV…FDEEDADEIE (236 aa)). ATP-binding positions include K46, 53–55 (GRG), E99, A102, and E107. 2 residues coordinate Mg(2+): N199 and D213. Substrate is bound by residues N264 and 321–323 (GIM).

It belongs to the succinate/malate CoA ligase beta subunit family. In terms of assembly, heterotetramer of two alpha and two beta subunits. It depends on Mg(2+) as a cofactor.

It catalyses the reaction succinate + ATP + CoA = succinyl-CoA + ADP + phosphate. The catalysed reaction is GTP + succinate + CoA = succinyl-CoA + GDP + phosphate. It participates in carbohydrate metabolism; tricarboxylic acid cycle; succinate from succinyl-CoA (ligase route): step 1/1. Functionally, succinyl-CoA synthetase functions in the citric acid cycle (TCA), coupling the hydrolysis of succinyl-CoA to the synthesis of either ATP or GTP and thus represents the only step of substrate-level phosphorylation in the TCA. The beta subunit provides nucleotide specificity of the enzyme and binds the substrate succinate, while the binding sites for coenzyme A and phosphate are found in the alpha subunit. The chain is Succinate--CoA ligase [ADP-forming] subunit beta from Aromatoleum aromaticum (strain DSM 19018 / LMG 30748 / EbN1) (Azoarcus sp. (strain EbN1)).